A 265-amino-acid chain; its full sequence is MKIAIAGASGRMGRMLIEAVLNDSDAQLVGALDRADSPFLGQDAGTFLGKETGVKLTADLDAVFAQADTLIDFTRPEGTMAHIEAALRHDVKLVIGTTGFTAEQKAELQAAAGKIGIVFAANMSVGVNVTLKLLEFAAKHFSHGYDIEIIEAHHRHKVDAPSGTALMMGEAVAGALGRSLDDCAVYGRHGVTGERDPSSIGFAAVRGGDIVGDHTVLFAGIGERIEITHKSSSRVSYAQGALRAVHFLSARGAGLFDMQDVLGLR.

NAD(+) is bound by residues 7–12 and aspartate 33; that span reads GASGRM. Arginine 34 lines the NADP(+) pocket. NAD(+) is bound by residues 96–98 and 120–123; these read GTT and AANM. The active-site Proton donor/acceptor is histidine 153. Histidine 154 provides a ligand contact to (S)-2,3,4,5-tetrahydrodipicolinate. Lysine 157 acts as the Proton donor in catalysis. A (S)-2,3,4,5-tetrahydrodipicolinate-binding site is contributed by 163–164; that stretch reads GT.

Belongs to the DapB family.

The protein resides in the cytoplasm. It carries out the reaction (S)-2,3,4,5-tetrahydrodipicolinate + NAD(+) + H2O = (2S,4S)-4-hydroxy-2,3,4,5-tetrahydrodipicolinate + NADH + H(+). The enzyme catalyses (S)-2,3,4,5-tetrahydrodipicolinate + NADP(+) + H2O = (2S,4S)-4-hydroxy-2,3,4,5-tetrahydrodipicolinate + NADPH + H(+). It functions in the pathway amino-acid biosynthesis; L-lysine biosynthesis via DAP pathway; (S)-tetrahydrodipicolinate from L-aspartate: step 4/4. Functionally, catalyzes the conversion of 4-hydroxy-tetrahydrodipicolinate (HTPA) to tetrahydrodipicolinate. The sequence is that of 4-hydroxy-tetrahydrodipicolinate reductase from Burkholderia lata (strain ATCC 17760 / DSM 23089 / LMG 22485 / NCIMB 9086 / R18194 / 383).